We begin with the raw amino-acid sequence, 550 residues long: Acetyl-coenzyme A transporter 1 (550 aa).

Over methionine 1–serine 74 the chain is Cytoplasmic. A Phosphoserine modification is found at serine 42. A helical membrane pass occupies residues isoleucine 75–isoleucine 95. Topologically, residues proline 96–serine 113 are extracellular. An N-linked (GlcNAc...) asparagine glycan is attached at asparagine 103. Residues phenylalanine 114–phenylalanine 134 traverse the membrane as a helical segment. Over lysine 135–lysine 141 the chain is Cytoplasmic. Residues serine 142–valine 162 form a helical membrane-spanning segment. At aspartate 163–threonine 256 the chain is on the extracellular side. The helical transmembrane segment at leucine 257–leucine 277 threads the bilayer. The Cytoplasmic portion of the chain corresponds to leucine 278–lysine 300. A helical transmembrane segment spans residues leucine 301–serine 321. The Extracellular segment spans residues lysine 322–glutamate 344. A helical membrane pass occupies residues histidine 345–serine 365. Residues lysine 366–asparagine 375 lie on the Cytoplasmic side of the membrane. A helical transmembrane segment spans residues isoleucine 376–tryptophan 396. Residues tryptophan 397–glycine 405 are Extracellular-facing. The chain crosses the membrane as a helical span at residues glycine 406–leucine 426. The Cytoplasmic portion of the chain corresponds to tyrosine 427–aspartate 509. The chain crosses the membrane as a helical span at residues glycine 510–glycine 530. Over proline 531–asparagine 550 the chain is Extracellular.

This sequence belongs to the SLC33A transporter family. Homodimerizes. In terms of tissue distribution, expressed in brain at all developmental stages. Detected in hippocampus, hypothalamus, cerebellum, cortex, olfactory bulb, and the ventral and dorsal anterior olfactory nucleus.

The protein resides in the endoplasmic reticulum membrane. The enzyme catalyses acetyl-CoA(in) = acetyl-CoA(out). Its function is as follows. Acetyl-CoA transporter that mediates active acetyl-CoA import through the endoplasmic reticulum (ER) membrane into the ER lumen where specific ER-based acetyl-CoA:lysine acetyltransferases are responsible for the acetylation of ER-based protein substrates, such as BACE1. Necessary for O-acetylation of gangliosides. The sequence is that of Acetyl-coenzyme A transporter 1 (Slc33a1) from Rattus norvegicus (Rat).